Consider the following 149-residue polypeptide: 16.9 kDa class I heat shock protein 3 (149 aa).

The sHSP domain maps to 35 to 149; the sequence is DTAAFANARV…PEVKAIEISG (115 aa).

Belongs to the small heat shock protein (HSP20) family. In terms of assembly, may form oligomeric structures.

The protein localises to the cytoplasm. The chain is 16.9 kDa class I heat shock protein 3 (HSP16.9C) from Oryza sativa subsp. japonica (Rice).